Consider the following 701-residue polypeptide: Elongation factor G (701 aa).

One can recognise a tr-type G domain in the interval 8–290 (SRYRNIGISA…AVIEYLPAPT (283 aa)). Residues 17 to 24 (AHIDAGKT), 88 to 92 (DTPGH), and 142 to 145 (NKMD) contribute to the GTP site.

Belongs to the TRAFAC class translation factor GTPase superfamily. Classic translation factor GTPase family. EF-G/EF-2 subfamily.

The protein localises to the cytoplasm. Functionally, catalyzes the GTP-dependent ribosomal translocation step during translation elongation. During this step, the ribosome changes from the pre-translocational (PRE) to the post-translocational (POST) state as the newly formed A-site-bound peptidyl-tRNA and P-site-bound deacylated tRNA move to the P and E sites, respectively. Catalyzes the coordinated movement of the two tRNA molecules, the mRNA and conformational changes in the ribosome. This Actinobacillus pleuropneumoniae serotype 5b (strain L20) protein is Elongation factor G.